Consider the following 243-residue polypeptide: Carboxy-S-adenosyl-L-methionine synthase (243 aa).

S-adenosyl-L-methionine-binding positions include Tyr-40, 65 to 67 (GCS), 90 to 91 (DN), 118 to 119 (DI), Asn-133, and Arg-200.

It belongs to the class I-like SAM-binding methyltransferase superfamily. Cx-SAM synthase family. In terms of assembly, homodimer.

The enzyme catalyses prephenate + S-adenosyl-L-methionine = carboxy-S-adenosyl-L-methionine + 3-phenylpyruvate + H2O. Catalyzes the conversion of S-adenosyl-L-methionine (SAM) to carboxy-S-adenosyl-L-methionine (Cx-SAM). This Shewanella putrefaciens (strain CN-32 / ATCC BAA-453) protein is Carboxy-S-adenosyl-L-methionine synthase.